A 551-amino-acid polypeptide reads, in one-letter code: MKPSPQRTLIKKLLVLLGPLVAVPLLFFGPEYRCLFSIIFLSTYWIGEAFPIGVTSLFPLALYPILQIVPSKQISPVYFKDSIVLFMCTLIMAMAVEATGLHRRIALKLLTKVGAKQPVMLLGFMCITSFISFFVSDTACTALMCPTAVALLMSMSDAVQHLKEDHRKPKPPPDDATVAEKLRIDDMTPQDAGFCKALILACAHASLIGGTAIITSTGPNLVFRENIHKRYPEGQVTMTYLQWMVFAIPPMFVYLLASYIILVCYFMGPSTFARWFERPSKEEAHLKKLIEKNIQTMYEDLGDVSWGEKSVFVFFILLIGSWISRDPGFTPGWGDLLPHRNFISDSVSGVLISCILFVWPKDPFDPIDPMAPILKWTDMKSKFSWSCTLLIGAGYAISEGVDKSGLSRLISCGMKNIFVGMSSLPLQLTVTTIIVIMTEFASNVSTGSIFIPISLGVAESMGVHPLYLALPTTVACSFAFMLPISTPPNAVVYDTKVISMVEMIVCGFLLNIACILITSLNMNTWTYFIFSLNIFPENIVISSENSSYPVC.

10 consecutive transmembrane segments (helical) span residues 9 to 29 (LIKK…LFFG), 34 to 54 (CLFS…PIGV), 82 to 102 (SIVL…TGLH), 119 to 139 (VMLL…SDTA), 194 to 214 (FCKA…TAII), 243 to 263 (WMVF…IILV), 347 to 367 (VSGV…FDPI), 417 to 437 (IFVG…IVIM), 449 to 469 (IFIP…LYLA), and 497 to 517 (VISM…CILI).

The protein belongs to the SLC13A/DASS transporter (TC 2.A.47) family. NADC subfamily.

The protein resides in the membrane. Its function is as follows. High-affinity sodium-dicarboxylate cotransporter that accepts a range of tricarboxylic acid-cycle intermediates with 4-5 carbon atoms. There is no interaction with monocarboxylates. In Caenorhabditis elegans, this protein is Sodium-dependent high-affinity dicarboxylate transporter 2 (nac-2).